We begin with the raw amino-acid sequence, 364 residues long: Aminomethyltransferase (364 aa).

This sequence belongs to the GcvT family. As to quaternary structure, the glycine cleavage system is composed of four proteins: P, T, L and H.

The enzyme catalyses N(6)-[(R)-S(8)-aminomethyldihydrolipoyl]-L-lysyl-[protein] + (6S)-5,6,7,8-tetrahydrofolate = N(6)-[(R)-dihydrolipoyl]-L-lysyl-[protein] + (6R)-5,10-methylene-5,6,7,8-tetrahydrofolate + NH4(+). Its function is as follows. The glycine cleavage system catalyzes the degradation of glycine. This chain is Aminomethyltransferase, found in Shewanella woodyi (strain ATCC 51908 / MS32).